The primary structure comprises 112 residues: Nitrogen regulatory protein GlnK1 (112 aa).

T29 contacts ADP. T29 and V38 together coordinate ATP. 52-54 contacts 2-oxoglutarate; the sequence is IVD. Residues V64, 88–90, and 101–103 each bind ADP; these read DGK and RVR. Residues V64, 86-90, and 101-103 contribute to the ATP site; these read PGDGK and RVR.

The protein belongs to the P(II) protein family. Homotrimer. Interacts and forms a complex with Amt1.

The protein resides in the cytoplasm. With respect to regulation, formation of the GlnK1/Amt1 complex is decreased in the presence of Mg-ATP or 2-oxoglutarate. The presence of both effectors abolishes the formation of the complex. Functionally, involved in the regulation of nitrogen metabolism. Regulates the activity of its targets by protein-protein interaction in response to the nitrogen status of the cell. Regulates the activity of the ammonia channel Amt1 via direct interaction. In Methanocaldococcus jannaschii (strain ATCC 43067 / DSM 2661 / JAL-1 / JCM 10045 / NBRC 100440) (Methanococcus jannaschii), this protein is Nitrogen regulatory protein GlnK1.